The primary structure comprises 551 residues: Membrane protein insertase YidC (551 aa).

Residues 3-23 form a helical membrane-spanning segment; it reads ANHIRILLLVTIAIMFISLMG. Residues 33 to 47 are compositionally biased toward polar residues; that stretch reads NTKQQTSATQNNSHY. Residues 33–58 form a disordered region; sequence NTKQQTSATQNNSHYDNADSSTNTDV. Helical transmembrane passes span 361–381, 431–451, and 504–524; these read LVGN…LIFY, LSGC…YWVL, and VMMF…SGLV.

This sequence belongs to the OXA1/ALB3/YidC family. Type 1 subfamily. Interacts with the Sec translocase complex via SecD. Specifically interacts with transmembrane segments of nascent integral membrane proteins during membrane integration.

It is found in the cell inner membrane. Its function is as follows. Required for the insertion and/or proper folding and/or complex formation of integral membrane proteins into the membrane. Involved in integration of membrane proteins that insert both dependently and independently of the Sec translocase complex, as well as at least some lipoproteins. Aids folding of multispanning membrane proteins. The protein is Membrane protein insertase YidC of Francisella tularensis subsp. novicida (strain U112).